Consider the following 145-residue polypeptide: uncharacterized protein (145 aa).

The interval 71-95 is disordered; that stretch reads GARGRGRTYTKGGSSRSPASWAEQG.

This is an uncharacterized protein from Homo sapiens (Human).